The sequence spans 167 residues: Thioredoxin Y2, chloroplastic (167 aa).

The N-terminal 58 residues, 1–58 (MAISLATAYISPCFTPESSNSASPSRTLSSVRLPSQIRRFGSVQSPSSSTRFAPLTVR), are a transit peptide targeting the chloroplast. Positions 59-164 (AAKKQTFNSF…LVERIENSLQ (106 aa)) constitute a Thioredoxin domain. Residues Cys88 and Cys91 each act as nucleophile in the active site. Cys88 and Cys91 are joined by a disulfide.

This sequence belongs to the thioredoxin family. Plant Y-type subfamily. In terms of tissue distribution, expressed in leaves.

Its subcellular location is the plastid. It localises to the chloroplast stroma. In terms of biological role, thiol-disulfide oxidoreductase that poorly activates chloroplastic malate dehydrogenase (NADP-MDH) and fructose-1,6-bisphosphatase. Provides reducing equivalents for peroxiredoxin Q. This is Thioredoxin Y2, chloroplastic from Arabidopsis thaliana (Mouse-ear cress).